The following is a 266-amino-acid chain: Tryptophan synthase alpha chain (266 aa).

Catalysis depends on proton acceptor residues Glu-49 and Asp-60.

The protein belongs to the TrpA family. Tetramer of two alpha and two beta chains.

It catalyses the reaction (1S,2R)-1-C-(indol-3-yl)glycerol 3-phosphate + L-serine = D-glyceraldehyde 3-phosphate + L-tryptophan + H2O. It functions in the pathway amino-acid biosynthesis; L-tryptophan biosynthesis; L-tryptophan from chorismate: step 5/5. The alpha subunit is responsible for the aldol cleavage of indoleglycerol phosphate to indole and glyceraldehyde 3-phosphate. The protein is Tryptophan synthase alpha chain of Thioalkalivibrio sulfidiphilus (strain HL-EbGR7).